The chain runs to 404 residues: S-adenosylmethionine synthase (404 aa).

Over residues methionine 1 to valine 13 the composition is skewed to polar residues. A disordered region spans residues methionine 1–lysine 20. ATP is bound at residue histidine 17. A Mg(2+)-binding site is contributed by aspartate 19. A K(+)-binding site is contributed by glutamate 45. Residues glutamate 58 and glutamine 101 each contribute to the L-methionine site. Residues glutamine 101–arginine 111 are flexible loop. ATP is bound by residues aspartate 172–lysine 174, arginine 245–phenylalanine 246, aspartate 254, arginine 260–lysine 261, alanine 277, and lysine 281. Aspartate 254 is an L-methionine binding site. Residue lysine 285 coordinates L-methionine.

It belongs to the AdoMet synthase family. Homotetramer; dimer of dimers. Requires Mg(2+) as cofactor. It depends on K(+) as a cofactor.

It localises to the cytoplasm. It carries out the reaction L-methionine + ATP + H2O = S-adenosyl-L-methionine + phosphate + diphosphate. It participates in amino-acid biosynthesis; S-adenosyl-L-methionine biosynthesis; S-adenosyl-L-methionine from L-methionine: step 1/1. Its function is as follows. Catalyzes the formation of S-adenosylmethionine (AdoMet) from methionine and ATP. The overall synthetic reaction is composed of two sequential steps, AdoMet formation and the subsequent tripolyphosphate hydrolysis which occurs prior to release of AdoMet from the enzyme. This is S-adenosylmethionine synthase from Chlorobium limicola (strain DSM 245 / NBRC 103803 / 6330).